The sequence spans 354 residues: Arginase-2, mitochondrial (354 aa).

A mitochondrion-targeting transit peptide spans 1-22; it reads MSLRGSLSRLLQTRVHSILKKS. Residues His-120, Asp-143, His-145, and Asp-147 each contribute to the Mn(2+) site. Residues 145–149, 156–158, and Asp-202 contribute to the substrate site; these read HADIN and SGN. 2 residues coordinate Mn(2+): Asp-251 and Asp-253. 2 residues coordinate substrate: Thr-265 and Glu-296. The segment at 334 to 354 is disordered; that stretch reads YDQLPTPSSPDESENQARVRI.

Belongs to the arginase family. As to quaternary structure, homotrimer. Mn(2+) serves as cofactor. In terms of tissue distribution, expressed most strongly in kidney and prostate, much less strongly in the brain, skeletal muscle, placenta, lung, mammary gland, macrophage, uterus, testis and gut, but apparently not in the liver, heart and pancreas. Expressed in activated T cells.

It is found in the mitochondrion. It catalyses the reaction L-arginine + H2O = urea + L-ornithine. The protein operates within nitrogen metabolism; urea cycle; L-ornithine and urea from L-arginine: step 1/1. May play a role in the regulation of extra-urea cycle arginine metabolism and also in down-regulation of nitric oxide synthesis. Extrahepatic arginase functions to regulate L-arginine bioavailability to nitric oxid synthase (NOS). Arginine metabolism is a critical regulator of innate and adaptive immune responses. Seems to be involved in negative regulation of the survival capacity of activated CD4(+) and CD8(+) T cells. May suppress inflammation-related signaling in asthmatic airway epithelium. May contribute to the immune evasion of H.pylori by restricting M1 macrophage activation and polyamine metabolism. In fetal dendritic cells may play a role in promoting immune suppression and T cell TNF-alpha production during gestation. Regulates RPS6KB1 signaling, which promotes endothelial cell senescence and inflammation and implicates NOS3/eNOS dysfunction. Can inhibit endothelial autophagy independently of its enzymatic activity implicating mTORC2 signaling. Involved in vascular smooth muscle cell senescence and apoptosis independently of its enzymatic activity. Since NOS is found in the penile corpus cavernosum smooth muscle, the clitoral corpus cavernosum and the vagina, arginase-2 plays a role in both male and female sexual arousal. This chain is Arginase-2, mitochondrial (ARG2), found in Homo sapiens (Human).